Reading from the N-terminus, the 290-residue chain is Probable endonuclease 4 (290 aa).

9 residues coordinate Zn(2+): His69, His109, Glu145, Asp179, His182, His216, Asp229, His231, and Glu261.

Belongs to the AP endonuclease 2 family. Zn(2+) serves as cofactor.

It carries out the reaction Endonucleolytic cleavage to 5'-phosphooligonucleotide end-products.. Functionally, endonuclease IV plays a role in DNA repair. It cleaves phosphodiester bonds at apurinic or apyrimidinic (AP) sites, generating a 3'-hydroxyl group and a 5'-terminal sugar phosphate. The sequence is that of Probable endonuclease 4 from Chlorobium limicola (strain DSM 245 / NBRC 103803 / 6330).